The following is a 317-amino-acid chain: 2,3-dihydroxyphenylpropionate/2,3-dihydroxicinnamic acid 1,2-dioxygenase (317 aa).

H115 (proton donor) is an active-site residue. Residue H179 is the Proton acceptor of the active site.

The protein belongs to the LigB/MhpB extradiol dioxygenase family. Homotetramer. The cofactor is Fe(2+).

The enzyme catalyses 3-(2,3-dihydroxyphenyl)propanoate + O2 = (2Z,4E)-2-hydroxy-6-oxonona-2,4-dienedioate + H(+). It catalyses the reaction (2E)-3-(2,3-dihydroxyphenyl)prop-2-enoate + O2 = (2Z,4E,7E)-2-hydroxy-6-oxonona-2,4,7-trienedioate + H(+). It participates in aromatic compound metabolism; 3-phenylpropanoate degradation. Functionally, catalyzes the non-heme iron(II)-dependent oxidative cleavage of 2,3-dihydroxyphenylpropionic acid and 2,3-dihydroxicinnamic acid into 2-hydroxy-6-ketononadienedioate and 2-hydroxy-6-ketononatrienedioate, respectively. This Paraburkholderia phymatum (strain DSM 17167 / CIP 108236 / LMG 21445 / STM815) (Burkholderia phymatum) protein is 2,3-dihydroxyphenylpropionate/2,3-dihydroxicinnamic acid 1,2-dioxygenase.